The chain runs to 366 residues: D-alanine--D-alanine ligase (366 aa).

The region spanning 150–353 is the ATP-grasp domain; that stretch reads KRVLRDAGVP…YPALVDRLIV (204 aa). 180–235 contributes to the ATP binding site; the sequence is IGQLGLPLFIKPASQGSSVGVSKVTDRAGFAAALALAFRYDAKVLVEQGISGREIE. The Mg(2+) site is built by Asp307, Glu320, and Asn322.

Belongs to the D-alanine--D-alanine ligase family. Mg(2+) is required as a cofactor. It depends on Mn(2+) as a cofactor.

It is found in the cytoplasm. The catalysed reaction is 2 D-alanine + ATP = D-alanyl-D-alanine + ADP + phosphate + H(+). It participates in cell wall biogenesis; peptidoglycan biosynthesis. Cell wall formation. The protein is D-alanine--D-alanine ligase of Sodalis glossinidius (strain morsitans).